A 397-amino-acid chain; its full sequence is Serpin B10 (397 aa).

The short motif at K74–K77 is the Nuclear localization signal element.

Belongs to the serpin family. Ov-serpin subfamily.

The protein resides in the nucleus. Its subcellular location is the cytoplasm. Protease inhibitor that may play a role in the regulation of protease activities during hematopoiesis and apoptosis induced by TNF. May regulate protease activities in the cytoplasm and in the nucleus. This Rhinolophus ferrumequinum (Greater horseshoe bat) protein is Serpin B10 (SERPINB10).